The sequence spans 58 residues: UPF0391 membrane protein Sputcn32_1322 (58 aa).

The next 2 helical transmembrane spans lie at 6–26 (LMFLVVAIIAGLFGFTGIAGA) and 28–48 (AGIAKIIFFLFIVLLVISLLV).

The protein belongs to the UPF0391 family.

The protein resides in the cell membrane. This is UPF0391 membrane protein Sputcn32_1322 from Shewanella putrefaciens (strain CN-32 / ATCC BAA-453).